Consider the following 189-residue polypeptide: Ras-like protein 1 (189 aa).

10-17 contacts GTP; the sequence is GAGGVGKS. The Effector region signature appears at 32-40; the sequence is YDPTIEDSY. Residues 57–61 and 116–119 each bind GTP; these read DTAGQ and NKCD. The residue at position 186 (cysteine 186) is a Cysteine methyl ester. Cysteine 186 is lipidated: S-geranylgeranyl cysteine. Residues 187–189 constitute a propeptide, removed in mature form; the sequence is KML.

Belongs to the small GTPase superfamily. Ras family.

The protein resides in the cell membrane. The enzyme catalyses GTP + H2O = GDP + phosphate + H(+). Its activity is regulated as follows. Alternates between an inactive form bound to GDP and an active form bound to GTP. Activated by a guanine nucleotide-exchange factor (GEF) and inactivated by a GTPase-activating protein (GAP). Its function is as follows. Ras proteins bind GDP/GTP and possess intrinsic GTPase activity. Plays a role in eye development by regulating cell growth, survival of postmitotic ommatidial cells and differentiation of photoreceptor cells. During larval development, mediates Ptth/tor signaling leading to the production of ecdysone, a hormone required for the initiation of metamorphosis. The protein is Ras-like protein 1 of Drosophila willistoni (Fruit fly).